The chain runs to 157 residues: Protein Smg homolog (157 aa).

This sequence belongs to the Smg family.

The polypeptide is Protein Smg homolog (Idiomarina loihiensis (strain ATCC BAA-735 / DSM 15497 / L2-TR)).